The following is a 367-amino-acid chain: Probable alcohol dehydrogenase adh (367 aa).

Cys43, His64, Cys97, Cys100, Cys103, Cys111, and Asn163 together coordinate Zn(2+).

This sequence belongs to the zinc-containing alcohol dehydrogenase family. Zn(2+) serves as cofactor.

It catalyses the reaction a primary alcohol + NAD(+) = an aldehyde + NADH + H(+). It carries out the reaction a secondary alcohol + NAD(+) = a ketone + NADH + H(+). The polypeptide is Probable alcohol dehydrogenase adh (adh) (Mycobacterium tuberculosis (strain CDC 1551 / Oshkosh)).